Reading from the N-terminus, the 503-residue chain is Maturase K (503 aa).

This sequence belongs to the intron maturase 2 family. MatK subfamily.

Its subcellular location is the plastid. The protein localises to the chloroplast. In terms of biological role, usually encoded in the trnK tRNA gene intron. Probably assists in splicing its own and other chloroplast group II introns. The protein is Maturase K of Vicia villosa (Hairy vetch).